The following is a 417-amino-acid chain: Type IV inositol polyphosphate 5-phosphatase 9 (417 aa).

Catalytic stretches follow at residues 258-273 (DRVIFLGDLNYRISLP) and 339-354 (KKRAPAWCDRIIWYGN).

The protein belongs to the inositol polyphosphate 5-phosphatase family. In terms of tissue distribution, specifically expressed in roots.

It catalyses the reaction a 1,2-diacyl-sn-glycero-3-phospho-(1D-myo-inositol-4,5-bisphosphate) + H2O = a 1,2-diacyl-sn-glycero-3-phospho-(1D-myo-inositol 4-phosphate) + phosphate. It carries out the reaction a 1,2-diacyl-sn-glycero-3-phospho-(1D-myo-inositol-3,4,5-trisphosphate) + H2O = a 1,2-diacyl-sn-glycero-3-phospho-(1D-myo-inositol-3,4-bisphosphate) + phosphate. Has phosphatase activity toward PtdIns(4,5)P2 and at a lower extent toward PtdIns(3,4,5)P3 but not toward Ins(1,4,5)P3. Functions in salt stress response by regulating reactive oxygen species (ROS) production, endocytosis, Ca(2+) influx and stress-responsive genes expression. The polypeptide is Type IV inositol polyphosphate 5-phosphatase 9 (Arabidopsis thaliana (Mouse-ear cress)).